A 399-amino-acid chain; its full sequence is Ankyrin repeat domain-containing protein 65 (399 aa).

ANK repeat units lie at residues 40–69 (QGWG…SVEE), 73–102 (AGRT…PVGA), 106–135 (AGRT…SAAA), 139–168 (TGLT…PGPA), 176–205 (RGWT…GLDG), 207–231 (LLVA…RVDA), 235–264 (AGAT…DPGI), 268–297 (HGRS…EVDA), 301–330 (LGLT…QVDA), and 334–363 (LRKT…SPTL). Residues 377–399 (DLPQALPELGGGEKECEGIESTG) form a disordered region.

The sequence is that of Ankyrin repeat domain-containing protein 65 (ANKRD65) from Homo sapiens (Human).